The following is a 250-amino-acid chain: Transmembrane ascorbate-dependent reductase CYB561 (250 aa).

Position 1 is an N-acetylmethionine (M1). Residues 1–15 (MEHSSASVPAALPYY) lie on the Cytoplasmic side of the membrane. Residues 16–36 (VAFSQLLGLTVVAVTGAWLGL) traverse the membrane as a helical segment. The Cytochrome b561 domain occupies 18–219 (FSQLLGLTVV…FGVVVLYILA (202 aa)). The Vesicular portion of the chain corresponds to 37–50 (YRGGIAWESSLQFN). A helical membrane pass occupies residues 51–71 (VHPLCMVIGMIFLQGDALLVY). Positions 52, 72, and 79 each coordinate heme b. Residues 72 to 83 (RVFRREAKRTTK) are Cytoplasmic-facing. L-ascorbate contacts are provided by K79 and K83. Residues 84–104 (ILHGLLHVFAFIIALVGLVAV) form a helical membrane-spanning segment. Heme b-binding positions include H86, 115-118 (DLYS), and H120. The Vesicular segment spans residues 105–123 (FDYHKKKGYADLYSLHSWC). The helical transmembrane segment at 124 to 144 (GILVFVLYFVQWLVGFSFFLF) threads the bilayer. At 145-157 (PGASFSLRSRYRP) the chain is on the cytoplasmic side. An L-ascorbate-binding site is contributed by R152. Residues 158 to 178 (QHIFFGATIFLFSVGTALLGL) traverse the membrane as a helical segment. Heme b contacts are provided by H159 and E180. Over 179 to 197 (KEALLFKLGSKYSTFEPEG) the chain is Vesicular. The chain crosses the membrane as a helical span at residues 198 to 218 (VLANVLGLLLVCFGVVVLYIL). Residues 219-250 (AQADWKRPSQAEEQALSMDFKTLTEGDSPSPQ) are Cytoplasmic-facing. K224 lines the heme b pocket. Residues S246 and S248 each carry the phosphoserine modification.

It depends on heme b as a cofactor. In terms of tissue distribution, abundantly distributed in a number of neuroendocrine tissues.

It localises to the cytoplasmic vesicle. The protein localises to the secretory vesicle. The protein resides in the chromaffin granule membrane. The catalysed reaction is monodehydro-L-ascorbate radical(out) + L-ascorbate(in) = monodehydro-L-ascorbate radical(in) + L-ascorbate(out). Transmembrane reductase that uses ascorbate as an electron donor in the cytoplasm and transfers electrons across membranes to reduce monodehydro-L-ascorbate radical in the lumen of secretory vesicles. It is therefore involved the regeneration and homeostasis within secretory vesicles of ascorbate which in turn provides reducing equivalents needed to support the activity of intravesicular enzymes. This chain is Transmembrane ascorbate-dependent reductase CYB561, found in Mus musculus (Mouse).